The primary structure comprises 441 residues: Protein dcd1A (441 aa).

The signal sequence occupies residues 1–23; it reads MKIFNKLIFLIIQCILIISVTNA. N-linked (GlcNAc...) asparagine glycans are attached at residues Asn-45, Asn-261, Asn-308, and Asn-419.

Its subcellular location is the secreted. The sequence is that of Protein dcd1A (dcd1A) from Dictyostelium discoideum (Social amoeba).